We begin with the raw amino-acid sequence, 338 residues long: Large ribosomal subunit protein uL10 (338 aa).

Residues lysine 309–alanine 327 are compositionally biased toward basic and acidic residues. Residues lysine 309–phenylalanine 338 form a disordered region.

The protein belongs to the universal ribosomal protein uL10 family. Part of the 50S ribosomal subunit. Forms part of the ribosomal stalk which helps the ribosome interact with GTP-bound translation factors. Forms a heptameric L10(L12)2(L12)2(L12)2 complex, where L10 forms an elongated spine to which the L12 dimers bind in a sequential fashion.

Forms part of the ribosomal stalk, playing a central role in the interaction of the ribosome with GTP-bound translation factors. This is Large ribosomal subunit protein uL10 from Methanothermococcus thermolithotrophicus (Methanococcus thermolithotrophicus).